The primary structure comprises 486 residues: Aspartyl/glutamyl-tRNA(Asn/Gln) amidotransferase subunit B (486 aa).

Belongs to the GatB/GatE family. GatB subfamily. Heterotrimer of A, B and C subunits.

The enzyme catalyses L-glutamyl-tRNA(Gln) + L-glutamine + ATP + H2O = L-glutaminyl-tRNA(Gln) + L-glutamate + ADP + phosphate + H(+). It catalyses the reaction L-aspartyl-tRNA(Asn) + L-glutamine + ATP + H2O = L-asparaginyl-tRNA(Asn) + L-glutamate + ADP + phosphate + 2 H(+). Allows the formation of correctly charged Asn-tRNA(Asn) or Gln-tRNA(Gln) through the transamidation of misacylated Asp-tRNA(Asn) or Glu-tRNA(Gln) in organisms which lack either or both of asparaginyl-tRNA or glutaminyl-tRNA synthetases. The reaction takes place in the presence of glutamine and ATP through an activated phospho-Asp-tRNA(Asn) or phospho-Glu-tRNA(Gln). This chain is Aspartyl/glutamyl-tRNA(Asn/Gln) amidotransferase subunit B, found in Leptospira borgpetersenii serovar Hardjo-bovis (strain L550).